The sequence spans 291 residues: N-acetylmannosamine kinase (291 aa).

ATP is bound by residues 5–12 and 132–139; these read AIDIGGTK and GVGGGVVC. Zn(2+)-binding residues include His-156, Cys-166, Cys-168, and Cys-173.

It belongs to the ROK (NagC/XylR) family. NanK subfamily. In terms of assembly, homodimer.

It carries out the reaction an N-acyl-D-mannosamine + ATP = an N-acyl-D-mannosamine 6-phosphate + ADP + H(+). Its pathway is amino-sugar metabolism; N-acetylneuraminate degradation; D-fructose 6-phosphate from N-acetylneuraminate: step 2/5. Its function is as follows. Catalyzes the phosphorylation of N-acetylmannosamine (ManNAc) to ManNAc-6-P. The protein is N-acetylmannosamine kinase of Salmonella paratyphi A (strain ATCC 9150 / SARB42).